We begin with the raw amino-acid sequence, 283 residues long: Urease accessory protein UreD 2 (283 aa).

A compositionally biased stretch (basic and acidic residues) spans 1–11 (MGRRAPDRLDR). The tract at residues 1-30 (MGRRAPDRLDRGVTTTSPRTQAPPQAGRGV) is disordered. A compositionally biased stretch (polar residues) spans 13–23 (VTTTSPRTQAP).

This sequence belongs to the UreD family. As to quaternary structure, ureD, UreF and UreG form a complex that acts as a GTP-hydrolysis-dependent molecular chaperone, activating the urease apoprotein by helping to assemble the nickel containing metallocenter of UreC. The UreE protein probably delivers the nickel.

It is found in the cytoplasm. Required for maturation of urease via the functional incorporation of the urease nickel metallocenter. The chain is Urease accessory protein UreD 2 from Saccharopolyspora erythraea (strain ATCC 11635 / DSM 40517 / JCM 4748 / NBRC 13426 / NCIMB 8594 / NRRL 2338).